The following is a 176-amino-acid chain: Cytochrome b (176 aa).

Transmembrane regions (helical) follow at residues 33–53 (FGSLLGLCLLIQILTGLFLAM), 77–98 (WLIRYMHANGASLFFICLFLHV), and 113–133 (WNIGVILLFAVMATAFMGYVL). Positions 83 and 97 each coordinate heme b.

It belongs to the cytochrome b family. The cytochrome bc1 complex contains 11 subunits: 3 respiratory subunits (MT-CYB, CYC1 and UQCRFS1), 2 core proteins (UQCRC1 and UQCRC2) and 6 low-molecular weight proteins (UQCRH/QCR6, UQCRB/QCR7, UQCRQ/QCR8, UQCR10/QCR9, UQCR11/QCR10 and a cleavage product of UQCRFS1). This cytochrome bc1 complex then forms a dimer. It depends on heme b as a cofactor.

Its subcellular location is the mitochondrion inner membrane. In terms of biological role, component of the ubiquinol-cytochrome c reductase complex (complex III or cytochrome b-c1 complex) that is part of the mitochondrial respiratory chain. The b-c1 complex mediates electron transfer from ubiquinol to cytochrome c. Contributes to the generation of a proton gradient across the mitochondrial membrane that is then used for ATP synthesis. This Sciurus carolinensis (Eastern gray squirrel) protein is Cytochrome b (MT-CYB).